The following is a 776-amino-acid chain: DNA ligase (776 aa).

NAD(+) contacts are provided by residues 31–35 and 80–81; these read DAEYD and SL. K114 functions as the N6-AMP-lysine intermediate in the catalytic mechanism. NAD(+)-binding residues include R135, E172, K288, and K312. Positions 406, 409, 436, and 442 each coordinate Zn(2+). The 84-residue stretch at 693–776 folds into the BRCT domain; that stretch reads AEGLPLAGQT…TFLAEQGIVV (84 aa).

This sequence belongs to the NAD-dependent DNA ligase family. LigA subfamily. Requires Mg(2+) as cofactor. The cofactor is Mn(2+).

It catalyses the reaction NAD(+) + (deoxyribonucleotide)n-3'-hydroxyl + 5'-phospho-(deoxyribonucleotide)m = (deoxyribonucleotide)n+m + AMP + beta-nicotinamide D-nucleotide.. Functionally, DNA ligase that catalyzes the formation of phosphodiester linkages between 5'-phosphoryl and 3'-hydroxyl groups in double-stranded DNA using NAD as a coenzyme and as the energy source for the reaction. It is essential for DNA replication and repair of damaged DNA. This is DNA ligase from Pseudomonas putida (strain GB-1).